A 95-amino-acid polypeptide reads, in one-letter code: Aspartyl/glutamyl-tRNA(Asn/Gln) amidotransferase subunit C (95 aa).

Belongs to the GatC family. Heterotrimer of A, B and C subunits.

It catalyses the reaction L-glutamyl-tRNA(Gln) + L-glutamine + ATP + H2O = L-glutaminyl-tRNA(Gln) + L-glutamate + ADP + phosphate + H(+). The enzyme catalyses L-aspartyl-tRNA(Asn) + L-glutamine + ATP + H2O = L-asparaginyl-tRNA(Asn) + L-glutamate + ADP + phosphate + 2 H(+). In terms of biological role, allows the formation of correctly charged Asn-tRNA(Asn) or Gln-tRNA(Gln) through the transamidation of misacylated Asp-tRNA(Asn) or Glu-tRNA(Gln) in organisms which lack either or both of asparaginyl-tRNA or glutaminyl-tRNA synthetases. The reaction takes place in the presence of glutamine and ATP through an activated phospho-Asp-tRNA(Asn) or phospho-Glu-tRNA(Gln). In Pseudomonas fluorescens (strain ATCC BAA-477 / NRRL B-23932 / Pf-5), this protein is Aspartyl/glutamyl-tRNA(Asn/Gln) amidotransferase subunit C.